Here is a 1382-residue protein sequence, read N- to C-terminus: DNA-directed RNA polymerase subunit beta (1382 aa).

The protein belongs to the RNA polymerase beta chain family. In terms of assembly, the RNAP catalytic core consists of 2 alpha, 1 beta, 1 beta' and 1 omega subunit. When a sigma factor is associated with the core the holoenzyme is formed, which can initiate transcription.

The catalysed reaction is RNA(n) + a ribonucleoside 5'-triphosphate = RNA(n+1) + diphosphate. Its function is as follows. DNA-dependent RNA polymerase catalyzes the transcription of DNA into RNA using the four ribonucleoside triphosphates as substrates. The polypeptide is DNA-directed RNA polymerase subunit beta (Aliarcobacter butzleri (strain RM4018) (Arcobacter butzleri)).